A 238-amino-acid chain; its full sequence is Cysteine-rich venom protein 2 (238 aa).

The signal sequence occupies residues 1 to 19 (MIAFIVLLSLAAVLQQSSG). An SCP domain is found at 38-164 (VDKHNALRRS…STKYLYVCQY (127 aa)). Cystine bridges form between Cys75-Cys153, Cys92-Cys165, Cys148-Cys162, Cys184-Cys191, Cys187-Cys196, Cys200-Cys233, Cys209-Cys227, and Cys218-Cys231. The 34-residue stretch at 200–233 (CEYEDAYTNCNDLVKERKCQTEWIKSQCPATCFC) folds into the ShKT domain.

The protein belongs to the CRISP family. In terms of tissue distribution, expressed by the venom gland.

It is found in the secreted. In terms of biological role, blocks contraction of smooth muscle elicited by high potassium-induced depolarization, but does not block caffeine-stimulated contraction. May target voltage-gated calcium channels (Cav) on smooth muscle. The sequence is that of Cysteine-rich venom protein 2 from Hydrophis hardwickii (Hardwick's spine-bellied seasnake).